A 114-amino-acid chain; its full sequence is uncharacterized protein (114 aa).

The helical transmembrane segment at 13-30 (LYISAAGIASIYVVKTIV) threads the bilayer.

It localises to the mitochondrion outer membrane. This is an uncharacterized protein from Saccharomyces cerevisiae (strain ATCC 204508 / S288c) (Baker's yeast).